Here is a 154-residue protein sequence, read N- to C-terminus: SsrA-binding protein (154 aa).

The protein belongs to the SmpB family.

The protein localises to the cytoplasm. In terms of biological role, required for rescue of stalled ribosomes mediated by trans-translation. Binds to transfer-messenger RNA (tmRNA), required for stable association of tmRNA with ribosomes. tmRNA and SmpB together mimic tRNA shape, replacing the anticodon stem-loop with SmpB. tmRNA is encoded by the ssrA gene; the 2 termini fold to resemble tRNA(Ala) and it encodes a 'tag peptide', a short internal open reading frame. During trans-translation Ala-aminoacylated tmRNA acts like a tRNA, entering the A-site of stalled ribosomes, displacing the stalled mRNA. The ribosome then switches to translate the ORF on the tmRNA; the nascent peptide is terminated with the 'tag peptide' encoded by the tmRNA and targeted for degradation. The ribosome is freed to recommence translation, which seems to be the essential function of trans-translation. The protein is SsrA-binding protein of Lachnoclostridium phytofermentans (strain ATCC 700394 / DSM 18823 / ISDg) (Clostridium phytofermentans).